We begin with the raw amino-acid sequence, 402 residues long: LIM/homeobox protein Lhx5 (402 aa).

LIM zinc-binding domains follow at residues 3-61 and 62-125; these read AHCA…RRFG and TKCA…ASSL. Disordered stretches follow at residues 133-187, 291-335, and 365-392; these read VSSC…RTTI, NYDF…GHHP, and SGEV…LPHQ. The segment covering 151–167 has biased composition (basic and acidic residues); that stretch reads DESKETDHSTSSDKETA. The segment at residues 180-239 is a DNA-binding region (homeobox); sequence RRGPRTTIKAKQLETLKAAFIATPKPTRHIREQLAQETGLNMRVIQVWFQNRRSKERRMK. A compositionally biased stretch (polar residues) spans 300–319; sequence PSSQTQSPADSSYLQNSGPG.

In terms of assembly, interacts with ldb1 and with the N-terminus of rnf12.

It localises to the nucleus. Functionally, probably involved in the patterning of the nervous system, in particular in the early specification of the diencephalon. This Xenopus laevis (African clawed frog) protein is LIM/homeobox protein Lhx5 (lhx5).